The chain runs to 246 residues: Bis(5'-nucleosyl)-tetraphosphatase PrpE [asymmetrical] (246 aa).

Belongs to the PrpE family. It depends on Ni(2+) as a cofactor.

The enzyme catalyses P(1),P(4)-bis(5'-guanosyl) tetraphosphate + H2O = GMP + GTP + 2 H(+). In terms of biological role, asymmetrically hydrolyzes Ap4p to yield AMP and ATP. This Bacillus thuringiensis (strain Al Hakam) protein is Bis(5'-nucleosyl)-tetraphosphatase PrpE [asymmetrical].